A 421-amino-acid polypeptide reads, in one-letter code: UDP-N-acetylglucosamine 1-carboxyvinyltransferase (421 aa).

A phosphoenolpyruvate-binding site is contributed by 22-23 (KN). Residue R92 participates in UDP-N-acetyl-alpha-D-glucosamine binding. The Proton donor role is filled by C116. C116 carries the 2-(S-cysteinyl)pyruvic acid O-phosphothioketal modification. Residues D306 and V328 each contribute to the UDP-N-acetyl-alpha-D-glucosamine site.

The protein belongs to the EPSP synthase family. MurA subfamily.

It localises to the cytoplasm. It catalyses the reaction phosphoenolpyruvate + UDP-N-acetyl-alpha-D-glucosamine = UDP-N-acetyl-3-O-(1-carboxyvinyl)-alpha-D-glucosamine + phosphate. Its pathway is cell wall biogenesis; peptidoglycan biosynthesis. Cell wall formation. Adds enolpyruvyl to UDP-N-acetylglucosamine. The chain is UDP-N-acetylglucosamine 1-carboxyvinyltransferase from Thermotoga petrophila (strain ATCC BAA-488 / DSM 13995 / JCM 10881 / RKU-1).